We begin with the raw amino-acid sequence, 260 residues long: Sugar fermentation stimulation protein homolog (260 aa).

This sequence belongs to the SfsA family.

This is Sugar fermentation stimulation protein homolog from Chloroflexus aggregans (strain MD-66 / DSM 9485).